Reading from the N-terminus, the 608-residue chain is 1-deoxy-D-xylulose-5-phosphate synthase (608 aa).

Thiamine diphosphate contacts are provided by residues histidine 66 and glycine 107 to alanine 109. Aspartate 138 contacts Mg(2+). Thiamine diphosphate is bound by residues glycine 139–alanine 140, asparagine 167, phenylalanine 277, and glutamate 350. Asparagine 167 contacts Mg(2+).

Belongs to the transketolase family. DXPS subfamily. As to quaternary structure, homodimer. Requires Mg(2+) as cofactor. It depends on thiamine diphosphate as a cofactor.

The catalysed reaction is D-glyceraldehyde 3-phosphate + pyruvate + H(+) = 1-deoxy-D-xylulose 5-phosphate + CO2. It participates in metabolic intermediate biosynthesis; 1-deoxy-D-xylulose 5-phosphate biosynthesis; 1-deoxy-D-xylulose 5-phosphate from D-glyceraldehyde 3-phosphate and pyruvate: step 1/1. In terms of biological role, catalyzes the acyloin condensation reaction between C atoms 2 and 3 of pyruvate and glyceraldehyde 3-phosphate to yield 1-deoxy-D-xylulose-5-phosphate (DXP). This chain is 1-deoxy-D-xylulose-5-phosphate synthase, found in Thermotoga maritima (strain ATCC 43589 / DSM 3109 / JCM 10099 / NBRC 100826 / MSB8).